A 130-amino-acid chain; its full sequence is MSATQNYGTGRRKTATARVFLRPGTGKISINNRGLDQFFGRETARMVVRQPLELTETVEKFDIFVTVVGGGVSGQAGAIRHGITRALIEYDETLRSSLRKAGYVTRDAREVERKKVGLRKARKRPQYSKR.

The protein belongs to the universal ribosomal protein uS9 family.

This is Small ribosomal subunit protein uS9 from Pseudomonas aeruginosa (strain LESB58).